Reading from the N-terminus, the 378-residue chain is Chlorophyll synthase, chloroplastic (378 aa).

A chloroplast-targeting transit peptide spans 1–45; it reads MATSHPLAAAAATSSSSATFRPPLRFLSSPPSSLTLNRRRSFPVV. A run of 7 helical transmembrane segments spans residues 173–193, 199–219, 232–252, 257–277, 302–322, 327–347, and 357–377; these read VITQIWVLLLGGLGLGALLDI, FPIIFYLALGGSLLSYIYSAP, FALGASYIGLPWWAGQALFGT, IVVLTCLYSIAGLGIAIVNDF, WICVGAIDITQLSVAAYLLST, YALALLGLTIPQVILQFQYFL, and YQASAQPFFVFGLLVTALATS.

The protein belongs to the UbiA prenyltransferase family. Chlorophyll synthase subfamily. The cofactor is Mg(2+). Zn(2+) is required as a cofactor. It depends on Mn(2+) as a cofactor.

The protein resides in the plastid. It localises to the chloroplast membrane. The catalysed reaction is phytyl diphosphate + chlorophyllide a + H(+) = chlorophyll a + diphosphate. With respect to regulation, inhibited by N-phenylmaleimide (NPM) and diacetyl. In terms of biological role, involved in one of the last steps of the biosynthesis of chlorophyll a. Catalyzes the esterification of chlorophillide a with either geranylgeranyldiphosphate (GGPP) or phytyldiphosphate (PhyPP). May also use with a lower efficiency the monophosphates GGMP and PhyMP, but not the non-phosphorylated alcohols geranylgeraniol and phytol. The tetraprenyl diphosphate must bind to the enzyme as the first substrate and esterification occurs when this pre-loaded enzyme meets the second substrate, chlorophyllide. The chain is Chlorophyll synthase, chloroplastic (CHLG) from Avena sativa (Oat).